A 159-amino-acid chain; its full sequence is Ribosomal RNA large subunit methyltransferase H (159 aa).

S-adenosyl-L-methionine contacts are provided by residues L76, G108, and 127–132; that span reads FSKMTF.

It belongs to the RNA methyltransferase RlmH family. In terms of assembly, homodimer.

It localises to the cytoplasm. The catalysed reaction is pseudouridine(1915) in 23S rRNA + S-adenosyl-L-methionine = N(3)-methylpseudouridine(1915) in 23S rRNA + S-adenosyl-L-homocysteine + H(+). Its function is as follows. Specifically methylates the pseudouridine at position 1915 (m3Psi1915) in 23S rRNA. The chain is Ribosomal RNA large subunit methyltransferase H from Geobacillus thermodenitrificans (strain NG80-2).